The primary structure comprises 382 residues: Gap junction alpha-1 protein (382 aa).

Over 2–23 (GDWSALGKLLDKVQAYSTAGGK) the chain is Cytoplasmic. Ser-5 carries the phosphoserine modification. Residues 24–44 (VWLSVLFIFRILLLGTAVESA) traverse the membrane as a helical segment. Residues 45–76 (WGDEQSAFRCNTQQPGCENVCYDKSFPISHVR) are Extracellular-facing. 2 disulfides stabilise this stretch: Cys-54–Cys-192 and Cys-187–Cys-198. A helical transmembrane segment spans residues 77-97 (FWVLQIIFVSVPTLLYLAHVF). The Cytoplasmic portion of the chain corresponds to 98 to 155 (YVMRKEEKLNKKEEELKVAQTDGVNVDMHLKQIEIKKFKYGIEEHGKVKMRGGLLRTY). Residue Lys-144 forms a Glycyl lysine isopeptide (Lys-Gly) (interchain with G-Cter in SUMO) linkage. Residues 156–176 (IISILFKSIFEVAFLLIQWYI) form a helical membrane-spanning segment. Topologically, residues 177–207 (YGFSLSAVYTCKRDPCPHQVDCFLSRPTEKT) are extracellular. Residues 208–228 (IFIIFMLVVSLVSLALNIIEL) traverse the membrane as a helical segment. At 229 to 382 (FYVFFKGVKD…SRPRPDDLEI (154 aa)) the chain is on the cytoplasmic side. Lys-237 is covalently cross-linked (Glycyl lysine isopeptide (Lys-Gly) (interchain with G-Cter in SUMO)). The interval 244-382 (SDPYHATSGA…SRPRPDDLEI (139 aa)) is interaction with NOV. Residue Tyr-247 is modified to Phosphotyrosine. Ser-255 and Ser-262 each carry phosphoserine. Residues 264–382 (KYAYFNGCSS…SRPRPDDLEI (119 aa)) form an interaction with UBQLN4 region. Cys-271 carries the S-nitrosocysteine modification. Thr-275 carries the post-translational modification Phosphothreonine. Ser-306 and Ser-314 each carry phosphoserine. Residues 317–332 (QNRMGQAGSTISNSHA) show a composition bias toward polar residues. Residues 317 to 382 (QNRMGQAGST…SRPRPDDLEI (66 aa)) are disordered. Ser-325 is subject to Phosphoserine; by CK1. Thr-326 carries the post-translational modification Phosphothreonine. 2 positions are modified to phosphoserine; by CK1: Ser-328 and Ser-330. 2 positions are modified to phosphoserine: Ser-344 and Ser-365. The segment covering 362–374 (RPSSRASSRASSR) has biased composition (low complexity). Ser-368 bears the Phosphoserine; by PKC/PRKCG and PKC/PRKCD mark. Residues Ser-369 and Ser-373 each carry the phosphoserine modification.

This sequence belongs to the connexin family. Alpha-type (group II) subfamily. A connexon is composed of a hexamer of connexins. Interacts (via C-terminus) with TJP1. Interacts (via C-terminus) with SRC (via SH3 domain). Interacts (not ubiquitinated) with UBQLN4 (via UBA domain). Interacts with SGSM3 and CNST. Interacts with RIC1/CIP150. Interacts with CSNK1D. Interacts with NOV. Interacts with TMEM65. Interacts with ANK3/ANKG and PKP2. Post-translationally, phosphorylated at Ser-368 by PRKCG; phosphorylation induces disassembly of gap junction plaques and inhibition of gap junction activity. Phosphorylation at Ser-325, Ser-328 and Ser-330 by CK1 modulates gap junction assembly. Phosphorylation at Ser-368 by PRKCD triggers its internalization into small vesicles leading to proteasome-mediated degradation. Sumoylated with SUMO1, SUMO2 and SUMO3, which may regulate the level of functional Cx43 gap junctions at the plasma membrane. May be desumoylated by SENP1 or SENP2. In terms of processing, S-nitrosylation at Cys-271 is enriched at the muscle endothelial gap junction in arteries, it augments channel permeability and may regulate of smooth muscle cell to endothelial cell communication. Post-translationally, acetylated in the developing cortex; leading to delocalization from the cell membrane. As to expression, expressed at intercalated disks in the heart (at protein level). Expressed in the fetal cochlea.

It is found in the cell membrane. The protein localises to the cell junction. Its subcellular location is the gap junction. It localises to the endoplasmic reticulum. Functionally, gap junction protein that acts as a regulator of bladder capacity. A gap junction consists of a cluster of closely packed pairs of transmembrane channels, the connexons, through which materials of low MW diffuse from one cell to a neighboring cell. May play a critical role in the physiology of hearing by participating in the recycling of potassium to the cochlear endolymph. Negative regulator of bladder functional capacity: acts by enhancing intercellular electrical and chemical transmission, thus sensitizing bladder muscles to cholinergic neural stimuli and causing them to contract. May play a role in cell growth inhibition through the regulation of NOV expression and localization. Plays an essential role in gap junction communication in the ventricles. This is Gap junction alpha-1 protein (GJA1) from Homo sapiens (Human).